The following is a 616-amino-acid chain: Glycoprotein Q1 (616 aa).

A signal peptide spans 1–24; that stretch reads MRPPRRSAPILVCAISMATALSNA. N-linked (GlcNAc...) asparagine; by host glycans are attached at residues Asn23, Asn44, Asn282, Asn330, and Asn351.

In terms of assembly, interacts with isoform gQ2. The heterodimer gQ1-gQ2 associates with the glycoprotein complex gH-gL to form a tetrameric complex. The gH/gL/gQ1/gQ2 complex binds to host TNFRSF4. In terms of processing, glycosylated by host.

It is found in the virion. It localises to the host endoplasmic reticulum lumen. In terms of biological role, plays a role in virus entry by participating in host receptor binding at the cell surface. This chain is Glycoprotein Q1, found in Homo sapiens (Human).